Reading from the N-terminus, the 138-residue chain is Basic phospholipase A2 homolog MjTX-I (138 aa).

The N-terminal stretch at 1–16 (MRTLWIMAVLLVGVEG) is a signal peptide. Val-34 provides a ligand contact to suramin. Intrachain disulfides connect Cys-42/Cys-132, Cys-44/Cys-60, Cys-59/Cys-111, Cys-65/Cys-138, Cys-66/Cys-104, Cys-73/Cys-97, and Cys-91/Cys-102. A varespladib-binding site is contributed by Asn-43. 2 residues coordinate suramin: Gly-45 and Gly-48. 2 residues coordinate varespladib: His-63 and Lys-64. Lys-85 contacts suramin.

This sequence belongs to the phospholipase A2 family. Group II subfamily. K49 sub-subfamily. As to quaternary structure, monomer in solution. Homodimer; non-covalently linked (probable conventional/extended dimer conformation). Homotetramer (dimer of homodimer (probable conventional/extended dimer conformation)); non-covalently linked. Homooligomer. In terms of tissue distribution, expressed by the venom gland.

The protein localises to the secreted. Its activity is regulated as follows. Myotoxin activity is inhibited by suramin and varespladib. Inhibition by suramin may be caused by (i) distortion of MDiS from both monomers impairing the membrane disruption mechanism by the toxin and (ii) surface electrostatic changes of the complex that interfere with the toxin membrane dockage process (putative-MDoS is partially hidden). Inhibition by varespladib is probably through varespladib binding to MDoS. Functionally, snake venom phospholipase A2 homolog that lacks enzymatic activity. In vivo, it displays local myotoxin and edema-inducing activities and is lethal by intraperitoneal injection. The myotoxicity effect is weaker in comparison to other myotoxins, probably due to the formation of high molecular weight complexes and to the oligomeric conformation (conventional dimer). It shows specificity toward neurons and myotubes, but not on a variety of other cell types. This PLA2 excites a cohort of sensory neurons via ATP release and consequent activation of P2RX2 and/or P2RX3 purinergic receptors. Pannexin hemichannels act as downstream mediators of toxin-evoked ATP release. In vivo, it elicits nonneurogenic inflammatory pain, thermal hyperalgesia, and mechanical allodynia, of which the latter is completely dependent on purinergic signaling. The protein is Basic phospholipase A2 homolog MjTX-I of Bothrops moojeni (Lance-headed viper).